The primary structure comprises 396 residues: Beta-1,4-galactosyltransferase 3 (396 aa).

Residues 1 to 10 (MLRRLLERPC) lie on the Cytoplasmic side of the membrane. The helical; Signal-anchor for type II membrane protein transmembrane segment at 11–31 (TLALLVGSQLAVMMYLSLGGF) threads the bilayer. Residues 32 to 396 (RSLSALFGRE…ANHTAPHGSH (365 aa)) are Lumenal-facing. Asparagine 57 carries N-linked (GlcNAc...) asparagine glycosylation. The cysteines at positions 80 and 122 are disulfide-linked. 133-137 (PHRAR) provides a ligand contact to UDP-alpha-D-galactose. N-linked (GlcNAc...) asparagine glycosylation is present at asparagine 169. UDP-alpha-D-galactose contacts are provided by residues 172–174 (FNR), 199–200 (VD), tyrosine 229, and tryptophan 261. Cysteine 193 and cysteine 212 form a disulfide bridge. Position 200 (aspartate 200) interacts with Mn(2+). 263-266 (GEDD) is an N-acetyl-D-glucosamine binding site. Residue histidine 294 coordinates Mn(2+). 294–296 (HRG) lines the UDP-alpha-D-galactose pocket. Residue arginine 306 coordinates N-acetyl-D-glucosamine. The N-linked (GlcNAc...) asparagine glycan is linked to asparagine 340. The interval 341–396 (ITADIGTDPRGPRTSSGPHYPPGSSQAFRQEMLQRRPPARPGPLPTANHTAPHGSH) is disordered. A compositionally biased stretch (polar residues) spans 353–368 (RTSSGPHYPPGSSQAF). Asparagine 388 carries an N-linked (GlcNAc...) asparagine glycan.

The protein belongs to the glycosyltransferase 7 family. Requires Mn(2+) as cofactor.

It localises to the golgi apparatus. The protein localises to the golgi stack membrane. The enzyme catalyses an N-acetyl-beta-D-glucosaminyl derivative + UDP-alpha-D-galactose = a beta-D-galactosyl-(1-&gt;4)-N-acetyl-beta-D-glucosaminyl derivative + UDP + H(+). It carries out the reaction N-acetyl-D-glucosamine + UDP-alpha-D-galactose = beta-D-galactosyl-(1-&gt;4)-N-acetyl-D-glucosamine + UDP + H(+). It catalyses the reaction a beta-D-GlcNAc-(1-&gt;3)-beta-D-Gal-(1-&gt;4)-beta-D-Glc-(1&lt;-&gt;1)-Cer(d18:1(4E)) + UDP-alpha-D-galactose = a neolactoside nLc4Cer(d18:1(4E)) + UDP + H(+). The catalysed reaction is a beta-D-glucosylceramide + UDP-alpha-D-galactose = a beta-D-galactosyl-(1-&gt;4)-beta-D-glucosyl-(1&lt;-&gt;1)-ceramide + UDP + H(+). The enzyme catalyses a neolactoside IV(3)-beta-GlcNAc-nLc4Cer + UDP-alpha-D-galactose = a neolactoside nLc6Cer + UDP + H(+). It participates in protein modification; protein glycosylation. Responsible for the synthesis of complex-type N-linked oligosaccharides in many glycoproteins as well as the carbohydrate moieties of glycolipids. In Bos taurus (Bovine), this protein is Beta-1,4-galactosyltransferase 3 (B4GALT3).